A 289-amino-acid chain; its full sequence is MSDRLAVLPQYLLPKQALTHFAGFVASRERGWVTTEIIRRFVAKYRVNMSEALDSDIASYLTFNDFFTRALKPGARPLAQAALVCPVDGAISQFGAIEHDQIFQAKGHHYSTTALVGGDAALAAHYQNGHFATIYLSPKDYHRIHMPCDGRLTRMIYVPGDLFSVNPVTARGVPGLFARNERVVCVFESARGPFVLALVGATIVGSMATVWHGVVNPPRGKAVREWRYPASGQPEVVLRQGEEMGRFLLGSTVVLLFPKGPLRFNPDWEPGRAVRLGEAMADVAADSQR.

Residues Asp-88, His-145, and Ser-251 each act as charge relay system; for autoendoproteolytic cleavage activity in the active site. The active-site Schiff-base intermediate with substrate; via pyruvic acid; for decarboxylase activity is the Ser-251. Ser-251 carries the post-translational modification Pyruvic acid (Ser); by autocatalysis.

The protein belongs to the phosphatidylserine decarboxylase family. PSD-B subfamily. Prokaryotic type I sub-subfamily. As to quaternary structure, heterodimer of a large membrane-associated beta subunit and a small pyruvoyl-containing alpha subunit. Pyruvate is required as a cofactor. In terms of processing, is synthesized initially as an inactive proenzyme. Formation of the active enzyme involves a self-maturation process in which the active site pyruvoyl group is generated from an internal serine residue via an autocatalytic post-translational modification. Two non-identical subunits are generated from the proenzyme in this reaction, and the pyruvate is formed at the N-terminus of the alpha chain, which is derived from the carboxyl end of the proenzyme. The autoendoproteolytic cleavage occurs by a canonical serine protease mechanism, in which the side chain hydroxyl group of the serine supplies its oxygen atom to form the C-terminus of the beta chain, while the remainder of the serine residue undergoes an oxidative deamination to produce ammonia and the pyruvoyl prosthetic group on the alpha chain. During this reaction, the Ser that is part of the protease active site of the proenzyme becomes the pyruvoyl prosthetic group, which constitutes an essential element of the active site of the mature decarboxylase.

The protein localises to the cell membrane. The enzyme catalyses a 1,2-diacyl-sn-glycero-3-phospho-L-serine + H(+) = a 1,2-diacyl-sn-glycero-3-phosphoethanolamine + CO2. The protein operates within phospholipid metabolism; phosphatidylethanolamine biosynthesis; phosphatidylethanolamine from CDP-diacylglycerol: step 2/2. Its function is as follows. Catalyzes the formation of phosphatidylethanolamine (PtdEtn) from phosphatidylserine (PtdSer). The chain is Phosphatidylserine decarboxylase proenzyme from Polaromonas naphthalenivorans (strain CJ2).